The chain runs to 207 residues: Ras-related protein Rab-8A (207 aa).

Positions 17, 18, 19, 20, 21, 22, 23, 35, 39, and 40 each coordinate GTP. T22 lines the Mg(2+) pocket. 2 short sequence motifs (switch) span residues 31–45 and 63–80; these read DAFNSTFISTIGIDF and DTAGQERFRTITTAYYRG. The Mg(2+) site is built by T40 and D63. A GTP-binding site is contributed by G66. T72 carries the post-translational modification Phosphothreonine. Residues N121, K122, D124, A152, and K153 each contribute to the GTP site. Phosphoserine is present on residues S181 and S185. The residue at position 204 (C204) is a Cysteine methyl ester. Residue C204 is the site of S-geranylgeranyl cysteine attachment. The propeptide at 205–207 is removed in mature form; that stretch reads VLL.

The protein belongs to the small GTPase superfamily. Rab family. As to quaternary structure, interacts (GTP-bound form) with MICALL1; regulates RAB8A association with recycling endosomes. Interacts with MICALL2; competes with RAB13 and is involved in E-cadherin endocytic recycling. Interacts (GTP-bound form) with MICAL1, MICALCL, MICAL3, EHBP1 and EHBP1L1; at least in case of MICAL1, MICALCL, MICAL3 and EHBP1L1 two molecules of RAB8A can bind to one molecule of the effector protein; ternary complexes of RAB8A, RAB13 and either MICAL1 or EHBP1L1 are possible. Interacts with EHD1. Interacts with MAP4K2 and SYTL4. Interacts with SGSM1 and SGSM3. Interacts with RABIF, RIMS2, RPH3A and RPH3A. Interacts with OPTN. Interacts with RAB3IP, RAB3IP functions as guanine exchange factor (GEF). Interacts with MYO5B. Interacts with CIMAP3. Interacts with BIRC6/bruce. Interacts with OCRL. Interacts with AHI1. Interacts with DCDC1. Interacts with LRRK2; interaction facilitates phosphorylation of Thr-72. Interacts with RAB31P, GDI1, GDI2, CHM, CHML, RABGGTA, RABGGTB, TBC1D15 and INPP5B; these interactions are dependent on Thr-72 not being phosphorylated. Interacts with RILPL1 and RILPL2; these interactions are dependent on the phosphorylation of Thr-72 by LRRK2. Interacts with DZIP1; prevents inhibition by the GDP-dissociation inhibitor GDI2. Interacts (in GDP-bound form) with RAB3IP/Rabin8, RAB3IP functions as guanine exchange factor (GEF) towards RAB8A. Interacts (in GDP-bound form) with RPGR, RPGR functions as GEF towards RAB8A. Requires Mg(2+) as cofactor. Phosphorylation of Thr-72 in the switch II region by LRRK2 prevents the association of RAB regulatory proteins, including CHM, CHML and RAB GDP dissociation inhibitors GDI1 and GDI2. Phosphorylation by LRRK2 is required for localization to stressed lysosomes.

The protein localises to the cell membrane. It is found in the golgi apparatus. It localises to the endosome membrane. The protein resides in the recycling endosome membrane. Its subcellular location is the cell projection. The protein localises to the cilium. It is found in the cytoplasmic vesicle. It localises to the phagosome membrane. The protein resides in the cytoplasm. Its subcellular location is the cytoskeleton. The protein localises to the microtubule organizing center. It is found in the centrosome. It localises to the centriole. The protein resides in the cilium basal body. Its subcellular location is the midbody. The protein localises to the lysosome. It carries out the reaction GTP + H2O = GDP + phosphate + H(+). With respect to regulation, regulated by guanine nucleotide exchange factors (GEFs) such as RAB3IP/Rabin8 and RPGR which promote the exchange of bound GDP for free GTP, GTPase activating proteins (GAPs) which increase the GTP hydrolysis activity, and GDP dissociation inhibitors (GDIs) which inhibit the dissociation of the nucleotide from the GTPase. Activated in response to insulin. The small GTPases Rab are key regulators of intracellular membrane trafficking, from the formation of transport vesicles to their fusion with membranes. Rabs cycle between an inactive GDP-bound form and an active GTP-bound form that is able to recruit to membranes different sets of downstream effectors directly responsible for vesicle formation, movement, tethering and fusion. RAB8A is involved in polarized vesicular trafficking and neurotransmitter release. Together with RAB11A, RAB3IP, the exocyst complex, PARD3, PRKCI, ANXA2, CDC42 and DNMBP promotes transcytosis of PODXL to the apical membrane initiation sites (AMIS), apical surface formation and lumenogenesis. Regulates the compacted morphology of the Golgi. Together with MYO5B and RAB11A participates in epithelial cell polarization. Also involved in membrane trafficking to the cilium and ciliogenesis. Together with MICALL2, may also regulate adherens junction assembly. May play a role in insulin-induced transport to the plasma membrane of the glucose transporter GLUT4 and therefore play a role in glucose homeostasis. Involved in autophagy. Participates in the export of a subset of neosynthesized proteins through a Rab8-Rab10-Rab11-dependent endososomal export route. Targeted to and stabilized on stressed lysosomes through LRRK2 phosphorylation. Suppresses stress-induced lysosomal enlargement through EHBP1 and EHNP1L1 effector proteins. This is Ras-related protein Rab-8A (RAB8A) from Canis lupus familiaris (Dog).